Here is a 105-residue protein sequence, read N- to C-terminus: Small ribosomal subunit protein uS10 (105 aa).

The protein belongs to the universal ribosomal protein uS10 family. As to quaternary structure, part of the 30S ribosomal subunit.

In terms of biological role, involved in the binding of tRNA to the ribosomes. The protein is Small ribosomal subunit protein uS10 of Oleidesulfovibrio alaskensis (strain ATCC BAA-1058 / DSM 17464 / G20) (Desulfovibrio alaskensis).